The sequence spans 402 residues: MSTKRVITKEDIHLKARLLSEGAKVTVNKPPASGFNPFRAMVLNGSDLATLVRQEPYTRLEVQVNGDDVEFYDCGQHLASGRMQEAFSWRSGKLSNGRPVDAAVIGMNQDIINIHYSYSCDNNNTGRSCRFCFFFADQHIGVGKELAKMPFSKIEELAKEQAEAVKIATDAGWRGTLVIIGGLVDPSRRAQVADLVELVMAPLREQVSPEVLNELHITANLYPPDDFKEMEKWKASGLNSTEFDLEVTHPDYFKAICPGKSATYPLEYWLEAQEASVKIFGPGRGTTSFILMGLEPMNIMLEGVEERMSKGVYPNMLVYQPVPGADMFRMPPPNADWLVEASEKVADLYIKYQDRFDMPLAKDHRPGYTRMGRSQYIILAGDMLAYKLQEQGYELPEAYPVC.

Residues 104–359 form the Radical SAM core domain; the sequence is VIGMNQDIIN…IKYQDRFDMP (256 aa). [4Fe-4S] cluster contacts are provided by C120, C129, and C132.

This sequence belongs to the radical SAM superfamily. Requires [4Fe-4S] cluster as cofactor.

It catalyses the reaction a bacteriochlorophyllide c + 2 S-adenosyl-L-methionine + H2O = a bacteriochlorophyllide e + 2 5'-deoxyadenosine + 2 L-methionine + 2 H(+). It carries out the reaction a bacteriochlorophyllide d + 2 S-adenosyl-L-methionine + H2O = a bacteriochlorophyllide f + 2 5'-deoxyadenosine + 2 L-methionine + 2 H(+). Its pathway is porphyrin-containing compound metabolism; bacteriochlorophyll biosynthesis. Its function is as follows. Involved in the biosynthesis of bacteriochlorophyll e (BChl e). Catalyzes two consecutive hydroxylation reactions of the C-7 methyl group of bacteriochlorophyllide c (BChlide c) to form a geminal diol intermediate that spontaneously dehydrates to produce the formyl group of bacteriochlorophyllide e (BChlide e). Also able to catalyze the same reaction for bacteriochlorophyllide d (BChlide d) to give rise to bacteriochlorophyllide f (BChlide f). This chain is Bacteriochlorophyllide c C-7(1)-hydroxylase, found in Chlorobaculum limnaeum.